The chain runs to 360 residues: Peptide chain release factor 1 (360 aa).

The residue at position 237 (glutamine 237) is an N5-methylglutamine.

The protein belongs to the prokaryotic/mitochondrial release factor family. In terms of processing, methylated by PrmC. Methylation increases the termination efficiency of RF1.

The protein resides in the cytoplasm. Functionally, peptide chain release factor 1 directs the termination of translation in response to the peptide chain termination codons UAG and UAA. The protein is Peptide chain release factor 1 of Pseudomonas syringae pv. tomato (strain ATCC BAA-871 / DC3000).